The primary structure comprises 510 residues: Flavonoid 3',5'-hydroxylase (510 aa).

A heme-binding site is contributed by C447.

The protein belongs to the cytochrome P450 family. Heme is required as a cofactor.

It catalyses the reaction a 3',5'-unsubstituted flavanone + 2 reduced [NADPH--hemoprotein reductase] + 2 O2 = a 3',5'-dihydroxyflavanone + 2 oxidized [NADPH--hemoprotein reductase] + 2 H2O + 2 H(+). Its pathway is pigment biosynthesis; anthocyanin biosynthesis. Catalyzes the 3'5'-hydroxylation of naringenin and eriodictyol to form 5,7,3,'4',5'-pentahydroxyflavanone and 3',5'-hydroxylation of dihydrokaempferol and dihydroquercetin to form dihydromyricetin. This is Flavonoid 3',5'-hydroxylase (CYP75A7) from Eustoma exaltatum subsp. russellianum (Bluebells).